Here is a 242-residue protein sequence, read N- to C-terminus: Uridylate kinase (242 aa).

Residue 15-18 (KLSG) coordinates ATP. Residues 23–28 (GDEGFG) are involved in allosteric activation by GTP. A UMP-binding site is contributed by Gly-57. Residues Gly-58 and Arg-62 each contribute to the ATP site. UMP is bound by residues Asp-77 and 138 to 145 (TGNPFCTT). Residues Thr-165, Tyr-171, and Asp-174 each coordinate ATP.

This sequence belongs to the UMP kinase family. As to quaternary structure, homohexamer.

Its subcellular location is the cytoplasm. The enzyme catalyses UMP + ATP = UDP + ADP. It participates in pyrimidine metabolism; CTP biosynthesis via de novo pathway; UDP from UMP (UMPK route): step 1/1. Allosterically activated by GTP. Inhibited by UTP. Catalyzes the reversible phosphorylation of UMP to UDP. In Shewanella sp. (strain ANA-3), this protein is Uridylate kinase.